Here is a 240-residue protein sequence, read N- to C-terminus: Protein Thf1 (240 aa).

The stretch at 186–222 (KDLDLYRSNLEKVDQLLKVLEDAAEAERKKKEKQAAS) forms a coiled coil. Residues 212-240 (ERKKKEKQAASTTPAIEEAPVTTAESSES) form a disordered region.

It belongs to the THF1 family.

In terms of biological role, may be involved in photosynthetic membrane biogenesis. This Synechocystis sp. (strain ATCC 27184 / PCC 6803 / Kazusa) protein is Protein Thf1.